The following is a 495-amino-acid chain: Tyrosine 3-monooxygenase (495 aa).

Phosphoserine; by CaMK2 is present on S19. At S31 the chain carries Phosphoserine. A Phosphoserine; by CaMK2 and PKA modification is found at S40. A compositionally biased stretch (basic and acidic residues) spans 41–53; the sequence is LIEDARKEREKAE. The interval 41–65 is disordered; that stretch reads LIEDARKEREKAEAASAASSEPGDL. Residues H328, H333, and E373 each contribute to the Fe cation site. The residue at position 469 (S469) is a Phosphoserine.

This sequence belongs to the biopterin-dependent aromatic amino acid hydroxylase family. As to quaternary structure, homotetramer. Interacts (when phosphorylated at Ser-19) with YWHAG; one YWHAG dimer bounds to one TH tetramer this interaction may influence the phosphorylation and dephosphorylation of other sites. It depends on Fe(2+) as a cofactor. Phosphorylated on Ser-19, Ser-31 and Ser-40 by several protein kinases with different site specificities. Phosphorylation at Ser-31 and Ser-40 leads to an increase of TH activity. Phosphorylation at Ser-40 activates the enzyme and also counteracts the feedback inhibition of TH by catecholamines. Phosphorylation of Ser-19 and Ser-31 triggers the proteasomal degradation of TH through the ubiquitin-proteasome pathway. Phosphorylation at Ser-31 facilitates transport of TH from the soma to the nerve terminals via the microtubule network. Phosphorylation at Ser-19 induces the high-affinity binding to the 14-3-3 protein YWHAG; this interaction may influence the phosphorylation and dephosphorylation of other sites. Ser-19 increases the phosphorylation at Ser-40 in a hierarchical manner, leading to increased activity.

The protein localises to the cytoplasm. It is found in the perinuclear region. The protein resides in the nucleus. It localises to the cell projection. Its subcellular location is the axon. The protein localises to the cytoplasmic vesicle. It is found in the secretory vesicle. The protein resides in the synaptic vesicle. The catalysed reaction is (6R)-L-erythro-5,6,7,8-tetrahydrobiopterin + L-tyrosine + O2 = (4aS,6R)-4a-hydroxy-L-erythro-5,6,7,8-tetrahydrobiopterin + L-dopa. Its pathway is catecholamine biosynthesis; dopamine biosynthesis; dopamine from L-tyrosine: step 1/2. Inhibited in feedback fashion by the catecholamine neurotransmitters, especially by dopamine in competition with tetrahydrobiopterin. Phosphorylation of several Ser/Thr residues in the N-terminus regulates the catalytic activity. Ser-31 and Ser-40 are readily phosphorylated to activate the catalytic activity. A Cysteine modification induced by N-ethylmaleimide (NEM), inhibits tyrosine 3-monooxygenase activity through the modification of the Cys-174. Its function is as follows. Catalyzes the conversion of L-tyrosine to L-dihydroxyphenylalanine (L-Dopa), the rate-limiting step in the biosynthesis of cathecolamines, dopamine, noradrenaline, and adrenaline. Uses tetrahydrobiopterin and molecular oxygen to convert tyrosine to L-Dopa. In addition to tyrosine, is able to catalyze the hydroxylation of phenylalanine and tryptophan with lower specificity. Positively regulates the regression of retinal hyaloid vessels during postnatal development. The sequence is that of Tyrosine 3-monooxygenase (TH) from Canis lupus familiaris (Dog).